A 213-amino-acid polypeptide reads, in one-letter code: Adenylate kinase (213 aa).

10 to 15 contacts ATP; the sequence is GCGKGT. Positions 30–59 are NMP; that stretch reads STGDLMRKEISLNTRLGLKCQEYMNAGKYV. AMP contacts are provided by residues Thr-31, Arg-36, 57–59, 83–86, and Gln-90; these read KYV and GYPR. The interval 124–161 is LID; sequence NRLVCPLCKASFNLETRKPKQEGLCDFDNTKLVKRSDD. Arg-125 contributes to the ATP binding site. Zn(2+) contacts are provided by Cys-128 and Cys-131. 134–135 is an ATP binding site; it reads SF. Zn(2+)-binding residues include Cys-148 and Asp-151. 2 residues coordinate AMP: Arg-158 and Arg-169. Residue Asp-197 coordinates ATP.

The protein belongs to the adenylate kinase family. As to quaternary structure, monomer.

It localises to the cytoplasm. It catalyses the reaction AMP + ATP = 2 ADP. It participates in purine metabolism; AMP biosynthesis via salvage pathway; AMP from ADP: step 1/1. Catalyzes the reversible transfer of the terminal phosphate group between ATP and AMP. Plays an important role in cellular energy homeostasis and in adenine nucleotide metabolism. The polypeptide is Adenylate kinase (Mycoplasma mycoides subsp. mycoides SC (strain CCUG 32753 / NCTC 10114 / PG1)).